A 513-amino-acid chain; its full sequence is ATP synthase subunit alpha (513 aa).

An ATP-binding site is contributed by 169–176 (GDRQIGKS).

The protein belongs to the ATPase alpha/beta chains family. As to quaternary structure, F-type ATPases have 2 components, CF(1) - the catalytic core - and CF(0) - the membrane proton channel. CF(1) has five subunits: alpha(3), beta(3), gamma(1), delta(1), epsilon(1). CF(0) has three main subunits: a(1), b(2) and c(9-12). The alpha and beta chains form an alternating ring which encloses part of the gamma chain. CF(1) is attached to CF(0) by a central stalk formed by the gamma and epsilon chains, while a peripheral stalk is formed by the delta and b chains.

It is found in the cell inner membrane. The enzyme catalyses ATP + H2O + 4 H(+)(in) = ADP + phosphate + 5 H(+)(out). Functionally, produces ATP from ADP in the presence of a proton gradient across the membrane. The alpha chain is a regulatory subunit. In Colwellia psychrerythraea (strain 34H / ATCC BAA-681) (Vibrio psychroerythus), this protein is ATP synthase subunit alpha.